The primary structure comprises 245 residues: Uridylate kinase (245 aa).

An ATP-binding site is contributed by 12–15 (KLSG). Residues 20–25 (GERGVG) form an involved in allosteric activation by GTP region. Gly54 is a UMP binding site. ATP-binding residues include Gly55 and Arg59. Residues Asp74 and 135 to 142 (IGSPYFST) contribute to the UMP site. ATP-binding residues include Asn163, Tyr169, and Asp172.

Belongs to the UMP kinase family. As to quaternary structure, homohexamer.

It localises to the cytoplasm. The enzyme catalyses UMP + ATP = UDP + ADP. It functions in the pathway pyrimidine metabolism; CTP biosynthesis via de novo pathway; UDP from UMP (UMPK route): step 1/1. Allosterically activated by GTP. Inhibited by UTP. Its function is as follows. Catalyzes the reversible phosphorylation of UMP to UDP. This chain is Uridylate kinase, found in Streptococcus pneumoniae serotype 2 (strain D39 / NCTC 7466).